Reading from the N-terminus, the 66-residue chain is SPbeta prophage-derived uncharacterized protein YosK (66 aa).

The protein is SPbeta prophage-derived uncharacterized protein YosK (yosK) of Bacillus subtilis (strain 168).